Reading from the N-terminus, the 1499-residue chain is Condensin complex subunit 1 (1499 aa).

2 disordered regions span residues 1 to 43 (MPRK…DGLS) and 1421 to 1499 (ITKN…MLDD). Positions 1432–1446 (PTTMSGSSRTTSRAA) are enriched in low complexity. Acidic residues-rich tracts occupy residues 1458-1467 (SDEDDSDSDD) and 1486-1499 (ADDDSDSDEFMLDD).

It belongs to the CND1 (condensin subunit 1) family. Component of the condensin I complex, which contains the mix-1/SMC2 and smc-4/SMC4 heterodimer, and three non SMC subunits that probably regulate the complex: dpy-26, capg-1 and dpy-28. Within the complex, interacts with dpy-26 and smc-4. Component of the dosage compensation complex, which consist of the condensin I like components mix-1/SMC2 and dpy-27/SMC4, and the three non SMC subunits dpy-26, capg-1 and dpy-28. Within the complex, interacts with mix-1, dpy-27, dpy-26 and capg-1. Interacts with smcl-1. Post-translationally, sumoylated. Sumoylated in the context of the dosage compensation complex but not in the condensin I complex. Sumoylation is important for assembly of the dosage compensation complex and its robust binding to the X chromosome. As to expression, expressed in somatic and germline tissues (at protein level).

The protein localises to the nucleus. It is found in the chromosome. Functionally, required for both chromosome condensation and segregation during mitosis and meiosis and X-chromosome dosage compensation depending on its binding partners. Regulatory subunit of the condensin I complex, a complex required for conversion of interphase chromatin into mitotic-like condense chromosomes. The condensin I complex probably introduces positive supercoils into relaxed DNA in the presence of type I topoisomerases and converts nicked DNA into positive knotted forms in the presence of type II topoisomerases. The condensin I complex function is required for proper chromosome segregation in mitosis and meiosis. As a member of the condensin I complex, further controls the crossover number and distribution in meiosis by restricting double strand break formation, possibly by influencing higher-order chromosome structure. Plays a role in robust cytokinesis upon presence of chromatin obstructions. Also a member of the condensin I-like dosage compensation complex that associates specifically with hermaphrodite X chromosomes to reduce their gene transcription during interphase, possibly through chromatin reorganization. This Caenorhabditis elegans protein is Condensin complex subunit 1.